The primary structure comprises 109 residues: Large ribosomal subunit protein uL22 (109 aa).

It belongs to the universal ribosomal protein uL22 family. In terms of assembly, part of the 50S ribosomal subunit.

This protein binds specifically to 23S rRNA; its binding is stimulated by other ribosomal proteins, e.g. L4, L17, and L20. It is important during the early stages of 50S assembly. It makes multiple contacts with different domains of the 23S rRNA in the assembled 50S subunit and ribosome. Functionally, the globular domain of the protein is located near the polypeptide exit tunnel on the outside of the subunit, while an extended beta-hairpin is found that lines the wall of the exit tunnel in the center of the 70S ribosome. The chain is Large ribosomal subunit protein uL22 from Dehalococcoides mccartyi (strain ATCC BAA-2266 / KCTC 15142 / 195) (Dehalococcoides ethenogenes (strain 195)).